We begin with the raw amino-acid sequence, 513 residues long: Sphingosine-1-phosphate transporter SPNS2 (513 aa).

Helical transmembrane passes span 102 to 122 (GLLQTVFICSFMVAAPIFGYL), 130 to 150 (VILSSGIFFWSAITFSSSFIP), 163 to 183 (LVGIGEASYSTIAPTIIGDLF), 190 to 210 (LMLSVFYFAIPLGSGLGYITG), 222 to 242 (WALRVSPVLGVITGTLLLIFV), 276 to 296 (LATSTVSFATGALGMWIPLYL), 320 to 340 (LIFGAITCLTGFLGVIIGAGA), 354 to 374 (LVCAVGMLGSAIFICLVFVAA), 378 to 398 (IIAAYICIFAGETLLFSNWAI), 422 to 442 (TSHLLGDAGSPYLIGFISDLI), and 463 to 483 (LCPFVVVLGGMFFLATALFFL).

The protein belongs to the major facilitator superfamily. Spinster (TC 2.A.1.49) family.

It is found in the cell membrane. Its subcellular location is the endosome membrane. The enzyme catalyses sphing-4-enine 1-phosphate(in) = sphing-4-enine 1-phosphate(out). The catalysed reaction is sphinganine 1-phosphate(in) = sphinganine 1-phosphate(out). In terms of biological role, lipid transporter that specifically mediates export of sphingosine-1-phosphate (sphing-4-enine 1-phosphate, S1P) and sphinganine-1-phosphate. In Xenopus tropicalis (Western clawed frog), this protein is Sphingosine-1-phosphate transporter SPNS2 (spns2).